We begin with the raw amino-acid sequence, 52 residues long: Alpha-crystallin B chain (52 aa).

It belongs to the small heat shock protein (HSP20) family. In terms of assembly, homodimer. Aggregates with homologous proteins, including alpha-A-crystallin and the small heat shock protein HSPB1, to form large heteromeric complexes.

May contribute to the transparency and refractive index of the lens. This is Alpha-crystallin B chain (CRYAB) from Trachemys scripta elegans (Red-eared slider turtle).